Consider the following 299-residue polypeptide: 4-diphosphocytidyl-2-C-methyl-D-erythritol kinase (299 aa).

Residue lysine 18 is part of the active site. 104–114 (PIASGIGGGSS) contributes to the ATP binding site. Residue aspartate 146 is part of the active site.

The protein belongs to the GHMP kinase family. IspE subfamily.

The enzyme catalyses 4-CDP-2-C-methyl-D-erythritol + ATP = 4-CDP-2-C-methyl-D-erythritol 2-phosphate + ADP + H(+). It functions in the pathway isoprenoid biosynthesis; isopentenyl diphosphate biosynthesis via DXP pathway; isopentenyl diphosphate from 1-deoxy-D-xylulose 5-phosphate: step 3/6. In terms of biological role, catalyzes the phosphorylation of the position 2 hydroxy group of 4-diphosphocytidyl-2C-methyl-D-erythritol. The polypeptide is 4-diphosphocytidyl-2-C-methyl-D-erythritol kinase (Brucella abortus biovar 1 (strain 9-941)).